Reading from the N-terminus, the 397-residue chain is MNIHEYQAKALLREFGVPVSRGVPVLKASEAEAAAETLGGPVWVVKSQIHAGGRGKGKFKEASAGDKGGVRLAKSIDEVKQFASQMLGATLVTVQTGPAGKQVNRLYIEEGSDIDKEFYLSALVDRETSRVAFVVSTEGGVNIEDVAHTSPEKIVSFSVDPATGVMSHHGRTVAKALGLRGDLGKQAEKLVAQLYNAFIAKDMALLEINPLVVTRQGELRVLDAKVSFDDNALYRHPDAVALRDESEEDAKEIEASRFDLSYVALDGQIGCMVNGAGLAMATMDIIKLYGMSPANFLDVGGGATKDKVAAAFKIITADPNVKGILVNIFGGIMKCDVIAEGVVAAVKQVGLNVPLVVRLEGTNVDAGKKIIRESGLNVLPADDLDDAAQKIVKAVKG.

The ATP-grasp domain maps to 9 to 254 (KALLREFGVP…ESEEDAKEIE (246 aa)). ATP contacts are provided by residues K46, 53–55 (GRG), E109, S112, and E117. Mg(2+) contacts are provided by N209 and D223. Residues N274 and 331 to 333 (GIM) contribute to the substrate site.

The protein belongs to the succinate/malate CoA ligase beta subunit family. In terms of assembly, heterotetramer of two alpha and two beta subunits. It depends on Mg(2+) as a cofactor.

It catalyses the reaction succinate + ATP + CoA = succinyl-CoA + ADP + phosphate. The enzyme catalyses GTP + succinate + CoA = succinyl-CoA + GDP + phosphate. Its pathway is carbohydrate metabolism; tricarboxylic acid cycle; succinate from succinyl-CoA (ligase route): step 1/1. Succinyl-CoA synthetase functions in the citric acid cycle (TCA), coupling the hydrolysis of succinyl-CoA to the synthesis of either ATP or GTP and thus represents the only step of substrate-level phosphorylation in the TCA. The beta subunit provides nucleotide specificity of the enzyme and binds the substrate succinate, while the binding sites for coenzyme A and phosphate are found in the alpha subunit. The polypeptide is Succinate--CoA ligase [ADP-forming] subunit beta (Nitrobacter hamburgensis (strain DSM 10229 / NCIMB 13809 / X14)).